The sequence spans 251 residues: 2,3-bisphosphoglycerate-dependent phosphoglycerate mutase (251 aa).

Substrate contacts are provided by residues 7–14 (RHGESEWN), 20–21 (TG), R59, 86–89 (ERHY), K97, 113–114 (RR), and 186–187 (GN). The active-site Tele-phosphohistidine intermediate is the H8. E86 functions as the Proton donor/acceptor in the catalytic mechanism.

This sequence belongs to the phosphoglycerate mutase family. BPG-dependent PGAM subfamily.

The catalysed reaction is (2R)-2-phosphoglycerate = (2R)-3-phosphoglycerate. Its pathway is carbohydrate degradation; glycolysis; pyruvate from D-glyceraldehyde 3-phosphate: step 3/5. In terms of biological role, catalyzes the interconversion of 2-phosphoglycerate and 3-phosphoglycerate. This Treponema pallidum (strain Nichols) protein is 2,3-bisphosphoglycerate-dependent phosphoglycerate mutase.